A 212-amino-acid polypeptide reads, in one-letter code: MASKFLREYKLVVVGGGGVGKSCLTIQLIQSHFVDEYDPTIEDSYRKQCVIDDEVALLDVLDTAGQEEYSAMREQYMRTGEGFLLVYSITSRQSFEEIMTFQQQILRVKDKDYFPIIVVGNKCDLDKERVVSEQEGESLARQFGCKFIETSAKSRINVENAFYDLVREIRRYNKEMSNPSGSGAFGARAPDSKMDVSEPGESAGCCGKCIVM.

A GTP-binding site is contributed by 15–22; the sequence is GGGGVGKS. The Effector region signature appears at 37-45; it reads YDPTIEDSY. GTP contacts are provided by residues 62–66 and 121–124; these read DTAGQ and NKCD. Residues Cys-205 and Cys-206 are each lipidated (S-palmitoyl cysteine). Position 209 is a cysteine methyl ester (Cys-209). The S-geranylgeranyl cysteine moiety is linked to residue Cys-209. A propeptide spans 210-212 (removed in mature form); sequence IVM.

The protein belongs to the small GTPase superfamily. Ras family.

The protein localises to the cell membrane. The enzyme catalyses GTP + H2O = GDP + phosphate + H(+). Alternates between an inactive form bound to GDP and an active form bound to GTP. Activated by a guanine nucleotide-exchange factor (GEF) and inactivated by a GTPase-activating protein (GAP). This Emericella nidulans (strain FGSC A4 / ATCC 38163 / CBS 112.46 / NRRL 194 / M139) (Aspergillus nidulans) protein is Ras-like protein (rasA).